The sequence spans 49 residues: Large ribosomal subunit protein bL33D (49 aa).

The protein belongs to the bacterial ribosomal protein bL33 family.

The protein is Large ribosomal subunit protein bL33D (rpmG4) of Enterococcus faecalis (strain ATCC 700802 / V583).